An 85-amino-acid chain; its full sequence is Toxin CsE8 (85 aa).

Positions 1–19 (MNSLLMITACLVLFGTVWS) are cleaved as a signal peptide. The region spanning 20–83 (EKGYLVHEDT…TWPLIGKLCG (64 aa)) is the LCN-type CS-alpha/beta domain. 4 cysteine pairs are disulfide-bonded: C31/C82, C35/C58, C44/C63, and C48/C65. The residue at position 82 (C82) is a Cysteine amide.

The protein belongs to the long (4 C-C) scorpion toxin superfamily. Sodium channel inhibitor family. Beta subfamily. As to expression, expressed by the venom gland.

The protein resides in the secreted. Its function is as follows. Beta toxins bind voltage-independently at site-4 of sodium channels (Nav) and shift the voltage of activation toward more negative potentials thereby affecting sodium channel activation and promoting spontaneous and repetitive firing. This is Toxin CsE8 from Centruroides sculpturatus (Arizona bark scorpion).